The sequence spans 112 residues: Tyrosine-protein phosphatase 8 (112 aa).

Positions 1 to 112 constitute a Tyrosine-protein phosphatase domain; sequence ENSTAIVMIT…ANSEYGPVVV (112 aa).

It belongs to the protein-tyrosine phosphatase family.

It carries out the reaction O-phospho-L-tyrosyl-[protein] + H2O = L-tyrosyl-[protein] + phosphate. This chain is Tyrosine-protein phosphatase 8 (STY-8), found in Styela plicata (Wrinkled sea squirt).